A 249-amino-acid polypeptide reads, in one-letter code: Ribosomal RNA small subunit methyltransferase G (249 aa).

3 residues coordinate S-adenosyl-L-methionine: G86, F91, and R178.

Belongs to the methyltransferase superfamily. RNA methyltransferase RsmG family.

It localises to the cytoplasm. In terms of biological role, specifically methylates the N7 position of a guanine in 16S rRNA. The polypeptide is Ribosomal RNA small subunit methyltransferase G (Bifidobacterium adolescentis (strain ATCC 15703 / DSM 20083 / NCTC 11814 / E194a)).